We begin with the raw amino-acid sequence, 95 residues long: Co-chaperonin GroES (95 aa).

The protein belongs to the GroES chaperonin family. As to quaternary structure, heptamer of 7 subunits arranged in a ring. Interacts with the chaperonin GroEL.

The protein resides in the cytoplasm. In terms of biological role, together with the chaperonin GroEL, plays an essential role in assisting protein folding. The GroEL-GroES system forms a nano-cage that allows encapsulation of the non-native substrate proteins and provides a physical environment optimized to promote and accelerate protein folding. GroES binds to the apical surface of the GroEL ring, thereby capping the opening of the GroEL channel. The sequence is that of Co-chaperonin GroES from Vesicomyosocius okutanii subsp. Calyptogena okutanii (strain HA).